Here is a 150-residue protein sequence, read N- to C-terminus: uncharacterized protein (150 aa).

The Rhodanese domain occupies 19–93 (GAQDYVLVDV…SSKRLALRES (75 aa)).

This is an uncharacterized protein from Synechococcus elongatus.